The following is a 504-amino-acid chain: ATP synthase subunit alpha 1 (504 aa).

170–177 (GDRQIGKT) is a binding site for ATP.

Belongs to the ATPase alpha/beta chains family. As to quaternary structure, F-type ATPases have 2 components, CF(1) - the catalytic core - and CF(0) - the membrane proton channel. CF(1) has five subunits: alpha(3), beta(3), gamma(1), delta(1), epsilon(1). CF(0) has three main subunits: a(1), b(2) and c(9-12). The alpha and beta chains form an alternating ring which encloses part of the gamma chain. CF(1) is attached to CF(0) by a central stalk formed by the gamma and epsilon chains, while a peripheral stalk is formed by the delta and b chains.

Its subcellular location is the cell inner membrane. It catalyses the reaction ATP + H2O + 4 H(+)(in) = ADP + phosphate + 5 H(+)(out). In terms of biological role, produces ATP from ADP in the presence of a proton gradient across the membrane. The alpha chain is a regulatory subunit. The polypeptide is ATP synthase subunit alpha 1 (Syntrophus aciditrophicus (strain SB)).